The following is a 160-amino-acid chain: Probable nucleoside diphosphate kinase DDB_G0292928 (160 aa).

Residues lysine 12, phenylalanine 61, arginine 103, threonine 109, arginine 122, and asparagine 132 each contribute to the ATP site. The active-site Pros-phosphohistidine intermediate is the histidine 135.

This sequence belongs to the NDK family. Requires Mg(2+) as cofactor.

It carries out the reaction a 2'-deoxyribonucleoside 5'-diphosphate + ATP = a 2'-deoxyribonucleoside 5'-triphosphate + ADP. It catalyses the reaction a ribonucleoside 5'-diphosphate + ATP = a ribonucleoside 5'-triphosphate + ADP. In Dictyostelium discoideum (Social amoeba), this protein is Probable nucleoside diphosphate kinase DDB_G0292928.